A 362-amino-acid chain; its full sequence is Cobalt-precorrin-5B C(1)-methyltransferase (362 aa).

Belongs to the CbiD family.

The enzyme catalyses Co-precorrin-5B + S-adenosyl-L-methionine = Co-precorrin-6A + S-adenosyl-L-homocysteine. It participates in cofactor biosynthesis; adenosylcobalamin biosynthesis; cob(II)yrinate a,c-diamide from sirohydrochlorin (anaerobic route): step 6/10. In terms of biological role, catalyzes the methylation of C-1 in cobalt-precorrin-5B to form cobalt-precorrin-6A. This Burkholderia orbicola (strain MC0-3) protein is Cobalt-precorrin-5B C(1)-methyltransferase.